The primary structure comprises 631 residues: Phosphomethylpyrimidine synthase (631 aa).

Residues asparagine 239, methionine 268, tyrosine 297, histidine 333, 353-355 (SRG), 394-397 (DGLR), and glutamate 433 each bind substrate. Histidine 437 is a Zn(2+) binding site. Tyrosine 460 is a substrate binding site. Residue histidine 501 participates in Zn(2+) binding. 3 residues coordinate [4Fe-4S] cluster: cysteine 581, cysteine 584, and cysteine 589.

The protein belongs to the ThiC family. In terms of assembly, homodimer. The cofactor is [4Fe-4S] cluster.

It carries out the reaction 5-amino-1-(5-phospho-beta-D-ribosyl)imidazole + S-adenosyl-L-methionine = 4-amino-2-methyl-5-(phosphooxymethyl)pyrimidine + CO + 5'-deoxyadenosine + formate + L-methionine + 3 H(+). It participates in cofactor biosynthesis; thiamine diphosphate biosynthesis. In terms of biological role, catalyzes the synthesis of the hydroxymethylpyrimidine phosphate (HMP-P) moiety of thiamine from aminoimidazole ribotide (AIR) in a radical S-adenosyl-L-methionine (SAM)-dependent reaction. In Salmonella arizonae (strain ATCC BAA-731 / CDC346-86 / RSK2980), this protein is Phosphomethylpyrimidine synthase.